We begin with the raw amino-acid sequence, 158 residues long: Endoribonuclease YbeY (158 aa).

Residues histidine 121, histidine 125, and histidine 131 each coordinate Zn(2+).

This sequence belongs to the endoribonuclease YbeY family. Zn(2+) serves as cofactor.

It localises to the cytoplasm. In terms of biological role, single strand-specific metallo-endoribonuclease involved in late-stage 70S ribosome quality control and in maturation of the 3' terminus of the 16S rRNA. The chain is Endoribonuclease YbeY from Exiguobacterium sp. (strain ATCC BAA-1283 / AT1b).